Consider the following 86-residue polypeptide: Probable protein BRICK1 (86 aa).

Residues 47 to 81 (EATTKSKLASLNEKLDILERKLEVLEVQVSSATTN) are a coiled coil.

This sequence belongs to the BRK1 family. As to quaternary structure, binds SCAR.

The protein resides in the cytoplasm. It is found in the cytoskeleton. Functionally, involved in regulation of actin and microtubule organization. Part of a WAVE complex that activates the Arp2/3 complex. The chain is Probable protein BRICK1 from Oryza sativa subsp. japonica (Rice).